A 136-amino-acid polypeptide reads, in one-letter code: UPF0299 membrane protein PM0880 (136 aa).

The next 4 membrane-spanning stretches (helical) occupy residues 5–25, 29–49, 67–87, and 92–112; these read IVDL…GEWI, LNIG…GLTF, YMAL…DVLF, and VLLL…GLLS.

Belongs to the UPF0299 family.

Its subcellular location is the cell inner membrane. This is UPF0299 membrane protein PM0880 from Pasteurella multocida (strain Pm70).